Reading from the N-terminus, the 926-residue chain is DNA topoisomerase 3-alpha (926 aa).

A Toprim domain is found at 10-154 (TVLNVAEKPS…NLFIRRAHFS (145 aa)). Positions 16, 123, and 125 each coordinate Mg(2+). Residues 172 to 604 (NQLFAEAVDA…CLQQMKACFL (433 aa)) form the Topo IA-type catalytic domain. An interaction with DNA region spans residues 219–224 (SYGPCQ). Y342 acts as the O-(5'-phospho-DNA)-tyrosine intermediate in catalysis. The segment at 642–670 (CNLCNESDMALRKNRDGNFMVGCMNYPQC) adopts a C4-type zinc-finger fold. 2 disordered regions span residues 740–760 (SRSQARRTPGTAPSNNIQGSN) and 775–806 (HASTNCPSRVPASRNSRPTATNPRNDESTVSC). Residues 750-760 (TAPSNNIQGSN) are compositionally biased toward polar residues. A CCHC-type 1 zinc finger spans residues 767 to 782 (CIHCQQRGHASTNCPS). Residues C806, C809, C831, and C836 each coordinate Zn(2+). The GRF-type zinc finger occupies 806 to 845 (CNTCGSQCVLRTANTEANRGRQFFSCPTQGCSFFAWEDSI). Residues 849–890 (SGNATTGSNSGGSGRRGSRGRGRGGRGGQSSGGRRGSGTSFV) are disordered. Residues 873 to 884 (GRGGQSSGGRRG) show a composition bias toward gly residues. The CCHC-type 2 zinc-finger motif lies at 901-917 (RCFSCGDPSHFANACPN).

The protein belongs to the type IA topoisomerase family. In terms of assembly, component of the RMI complex, containing at least TOP3A and RMI1. The RMI complex interacts with RECQL4A. The cofactor is Mg(2+).

The catalysed reaction is ATP-independent breakage of single-stranded DNA, followed by passage and rejoining.. Its function is as follows. Releases the supercoiling and torsional tension of DNA introduced during the DNA replication and transcription by transiently cleaving and rejoining one strand of the DNA duplex. Introduces a single-strand break via transesterification at a target site in duplex DNA. The scissile phosphodiester is attacked by the catalytic tyrosine of the enzyme, resulting in the formation of a DNA-(5'-phosphotyrosyl)-enzyme intermediate and the expulsion of a 3'-OH DNA strand. The free DNA strand then undergoes passage around the unbroken strand thus removing DNA supercoils. Finally, in the religation step, the DNA 3'-OH attacks the covalent intermediate to expel the active-site tyrosine and restore the DNA phosphodiester backbone. Essential component of the RMI complex, a complex that plays an important role in the resolution step of homologous recombination, in a process called Holliday Junction dissolution, to limit DNA crossover formation in cells. Together with RMI1, is essential for the resolution of meiotic recombination intermediates, a step that prevents entanglement of the parental chromosomes. May have DNA decatenation activity. The chain is DNA topoisomerase 3-alpha (TOP3A) from Arabidopsis thaliana (Mouse-ear cress).